The primary structure comprises 86 residues: Small ribosomal subunit protein bS20 (86 aa).

It belongs to the bacterial ribosomal protein bS20 family.

Functionally, binds directly to 16S ribosomal RNA. The sequence is that of Small ribosomal subunit protein bS20 from Kineococcus radiotolerans (strain ATCC BAA-149 / DSM 14245 / SRS30216).